The primary structure comprises 365 residues: Alanine racemase (365 aa).

The Proton acceptor; specific for D-alanine role is filled by K32. An N6-(pyridoxal phosphate)lysine modification is found at K32. R128 lines the substrate pocket. The active-site Proton acceptor; specific for L-alanine is the Y257. Residue M305 coordinates substrate.

The protein belongs to the alanine racemase family. Requires pyridoxal 5'-phosphate as cofactor.

It carries out the reaction L-alanine = D-alanine. Its pathway is amino-acid biosynthesis; D-alanine biosynthesis; D-alanine from L-alanine: step 1/1. Its function is as follows. Catalyzes the interconversion of L-alanine and D-alanine. May also act on other amino acids. This chain is Alanine racemase (alr), found in Francisella tularensis subsp. holarctica (strain FTNF002-00 / FTA).